A 317-amino-acid polypeptide reads, in one-letter code: Protease HtpX homolog (317 aa).

Helical transmembrane passes span 14-34 (LMGIAIFAIGFGIIYAILYYI) and 41-61 (IALLMVLLPIFIIMDIVQWLF). His-146 serves as a coordination point for Zn(2+). Glu-147 is an active-site residue. Residue His-150 participates in Zn(2+) binding. Transmembrane regions (helical) follow at residues 158–178 (MLLAIGLIPTLIFYFGYTLLF) and 189–209 (IVLLAIIAMAASFLFRFLILA). Glu-215 lines the Zn(2+) pocket.

It belongs to the peptidase M48B family. The cofactor is Zn(2+).

It localises to the cell membrane. In Thermoplasma acidophilum (strain ATCC 25905 / DSM 1728 / JCM 9062 / NBRC 15155 / AMRC-C165), this protein is Protease HtpX homolog.